We begin with the raw amino-acid sequence, 302 residues long: Transmembrane protein 191C (302 aa).

Disordered stretches follow at residues 1–21 (MAAT…GRQR) and 54–73 (LRRR…EAAR). The stretch at 5–160 (QELLLQLQKD…EKLQQDALQT (156 aa)) forms a coiled coil. The helical transmembrane segment at 238–258 (VLGALQVLLTLPLLFLGLSLL) threads the bilayer.

This sequence belongs to the TMEM191 family.

It localises to the membrane. The chain is Transmembrane protein 191C from Homo sapiens (Human).